We begin with the raw amino-acid sequence, 197 residues long: MLDREGYRPNVGIVLLNSRNEVFWGKRVGQHSWQFPQGGIQHGESPEQAMYRELHEEVGLLPEHVQIIGRTRDWLRYDVPEEYLRRQNSTRVHRAAYRGQKQIWFLLRLVGLDSDIQLRAFEHPEFDAWRWVPFWIQLDAVIGFKREVYQLALSELARYLSRGMRMQQLAWGTPLDLFQSFYAGNEDQSKSSEKSDK.

The region spanning 6 to 154 (GYRPNVGIVL…KREVYQLALS (149 aa)) is the Nudix hydrolase domain. Positions 38 to 59 (GGIQHGESPEQAMYRELHEEVG) match the Nudix box motif.

It belongs to the Nudix hydrolase family. RppH subfamily. It depends on a divalent metal cation as a cofactor.

Its function is as follows. Accelerates the degradation of transcripts by removing pyrophosphate from the 5'-end of triphosphorylated RNA, leading to a more labile monophosphorylated state that can stimulate subsequent ribonuclease cleavage. In Polynucleobacter necessarius subsp. necessarius (strain STIR1), this protein is RNA pyrophosphohydrolase.